The primary structure comprises 142 residues: ATP synthase epsilon chain (142 aa).

The protein belongs to the ATPase epsilon chain family. As to quaternary structure, F-type ATPases have 2 components, CF(1) - the catalytic core - and CF(0) - the membrane proton channel. CF(1) has five subunits: alpha(3), beta(3), gamma(1), delta(1), epsilon(1). CF(0) has three main subunits: a, b and c.

It is found in the cell inner membrane. In terms of biological role, produces ATP from ADP in the presence of a proton gradient across the membrane. The chain is ATP synthase epsilon chain from Koribacter versatilis (strain Ellin345).